A 200-amino-acid chain; its full sequence is NADH-quinone oxidoreductase subunit C (200 aa).

It belongs to the complex I 30 kDa subunit family. In terms of assembly, NDH-1 is composed of 14 different subunits. Subunits NuoB, C, D, E, F, and G constitute the peripheral sector of the complex.

The protein localises to the cell inner membrane. The enzyme catalyses a quinone + NADH + 5 H(+)(in) = a quinol + NAD(+) + 4 H(+)(out). NDH-1 shuttles electrons from NADH, via FMN and iron-sulfur (Fe-S) centers, to quinones in the respiratory chain. The immediate electron acceptor for the enzyme in this species is believed to be ubiquinone. Couples the redox reaction to proton translocation (for every two electrons transferred, four hydrogen ions are translocated across the cytoplasmic membrane), and thus conserves the redox energy in a proton gradient. The sequence is that of NADH-quinone oxidoreductase subunit C from Burkholderia mallei (strain NCTC 10247).